The primary structure comprises 556 residues: PTS system fructose-specific EIIB'BC component (556 aa).

2 PTS EIIB type-2 domains span residues 1–85 (MKLF…LANG) and 106–201 (IVAV…KAFK). Cys-112 acts as the Phosphocysteine intermediate; for EIIB activity in catalysis. A Phosphocysteine; by EIIA modification is found at Cys-112. The PTS EIIC type-2 domain occupies 224–556 (VYKHLMTGVS…AIIKSKNNAE (333 aa)). 10 helical membrane passes run 237–257 (PLVVAGGLLIAISFMFSFNVI), 275–295 (SGVAFKLMIAVFAGYVAFSIA), 302–322 (VGLIAGMLASEAGAGILGGII), 324–344 (GFLAGYVVKGLNVIIRLPASL), 349–369 (PILILPLLGSMIVGLTMIYLI), 390–410 (VNAIVLGAIIGAMMCIDMGGP), 431–451 (MAAAMAAGMVPPIGMTVATWI), 468–488 (FVLGLCFISEGALPFVAADPI), 490–510 (VIISSVIGGAVAGAISMGLNI), and 529–549 (LKYLGAIAIGALSTGVVYAII).

The protein localises to the cell inner membrane. It carries out the reaction D-fructose(out) + N(pros)-phospho-L-histidyl-[protein] = D-fructose 1-phosphate(in) + L-histidyl-[protein]. In terms of biological role, the phosphoenolpyruvate-dependent sugar phosphotransferase system (sugar PTS), a major carbohydrate active transport system, catalyzes the phosphorylation of incoming sugar substrates concomitantly with their translocation across the cell membrane. The enzyme II FruAB PTS system is involved in fructose transport. This is PTS system fructose-specific EIIB'BC component from Haemophilus influenzae (strain ATCC 51907 / DSM 11121 / KW20 / Rd).